A 314-amino-acid polypeptide reads, in one-letter code: Ribosomal protein uL3 glutamine methyltransferase (314 aa).

This sequence belongs to the protein N5-glutamine methyltransferase family. PrmB subfamily.

The enzyme catalyses L-glutaminyl-[ribosomal protein uL3] + S-adenosyl-L-methionine = N(5)-methyl-L-glutaminyl-[ribosomal protein uL3] + S-adenosyl-L-homocysteine + H(+). Methylates large ribosomal subunit protein uL3 on a specific glutamine residue. This chain is Ribosomal protein uL3 glutamine methyltransferase, found in Francisella tularensis subsp. tularensis (strain SCHU S4 / Schu 4).